The sequence spans 361 residues: Trans-enoyl reductase gkaC (361 aa).

Positions 15–357 (EDVGSFEISR…RREISGKKMV (343 aa)) constitute an Enoyl reductase (ER) domain. Residues 48–51 (CDWK), 172–175 (SSAS), 195–198 (SPKN), tyrosine 213, 260–261 (FE), and 351–352 (IS) contribute to the NADP(+) site.

Belongs to the zinc-containing alcohol dehydrogenase family. In terms of assembly, monomer.

It functions in the pathway mycotoxin biosynthesis. Functionally, trans-enoyl reductasee; part of the gene cluster that mediates the biosynthesis of GKK1032, fungal natural products containing a macrocyclic para-cyclophane connected to a decahydrofluorene ring system that show potent antitumor activities. Within the pathway, the PKS-NRPS gkaA, with the help of the trans-enoyl reductase gkaC, synthesize the polyketide-tyrosyl acyl thioester product which can be reductively off-loaded by the terminal reductase (R) domain in gkaA. The PKS module of gkaA acts in combination with the trans-acting enoyl reductase gkaC to produce a methylated polyketide attached to the ACP domain. In parallel, the adenylation (A) domain of the NRPS module activated L-tyrosine, which is then transferred to the ACP domain. The condensation (C) domain subsequently links this group to the polyketide chain, forming an enzyme-bound amide. The alpha/beta hydrolase gkaG is then required to catalyze the subsequent Knoevenagel condensation that affords the 3-pyrrolin-2-one ring, whereas the three proteins gkaB, gkadX and gkaZ then function synergistically to form the cyclophane. The chain is Trans-enoyl reductase gkaC from Penicillium citrinum.